Reading from the N-terminus, the 566-residue chain is Protein kintoun (566 aa).

Disordered regions lie at residues 183 to 298, 399 to 467, and 493 to 552; these read KYKG…TAPQ, EEEE…AETG, and QLEE…ESRI. Over residues 208–290 the composition is skewed to low complexity; it reads PQQTTGPQQP…HQPTDPQQTT (83 aa). Basic and acidic residues predominate over residues 399–424; it reads EEEERRAEEEESRKGGDEDGELHPDC. The segment covering 440–467 has biased composition (low complexity); sequence TPAADTHTPAADTHTPAADTHTPAAETG. Positions 535 to 550 are enriched in basic and acidic residues; the sequence is DPAHTDPAHTDPEMES.

The protein belongs to the PIH1 family. Kintoun subfamily.

The protein resides in the cytoplasm. It is found in the dynein axonemal particle. Its function is as follows. Required for cytoplasmic pre-assembly of axonemal dyneins, thereby playing a central role in motility in cilia and flagella. Involved in pre-assembly of dynein arm complexes in the cytoplasm before intraflagellar transport loads them for the ciliary compartment. This Danio rerio (Zebrafish) protein is Protein kintoun.